Consider the following 62-residue polypeptide: Photosystem II reaction center protein Z (62 aa).

A run of 2 helical transmembrane segments spans residues 8 to 28 and 41 to 61; these read AVFALIATSSILLISVPVVFA and FSGTSLWIGLVFLVGILNSLI.

This sequence belongs to the PsbZ family. In terms of assembly, PSII is composed of 1 copy each of membrane proteins PsbA, PsbB, PsbC, PsbD, PsbE, PsbF, PsbH, PsbI, PsbJ, PsbK, PsbL, PsbM, PsbT, PsbY, PsbZ, Psb30/Ycf12, at least 3 peripheral proteins of the oxygen-evolving complex and a large number of cofactors. It forms dimeric complexes.

Its subcellular location is the plastid. The protein localises to the chloroplast thylakoid membrane. Functionally, may control the interaction of photosystem II (PSII) cores with the light-harvesting antenna, regulates electron flow through the 2 photosystem reaction centers. PSII is a light-driven water plastoquinone oxidoreductase, using light energy to abstract electrons from H(2)O, generating a proton gradient subsequently used for ATP formation. The polypeptide is Photosystem II reaction center protein Z (Coffea arabica (Arabian coffee)).